We begin with the raw amino-acid sequence, 597 residues long: Elongation factor 4 (597 aa).

One can recognise a tr-type G domain in the interval 2-184 (DHIRNFSIIA…ALVAKVPPPK (183 aa)). Residues 14-19 (DHGKST) and 131-134 (NKID) contribute to the GTP site.

It belongs to the TRAFAC class translation factor GTPase superfamily. Classic translation factor GTPase family. LepA subfamily.

It is found in the cell inner membrane. The catalysed reaction is GTP + H2O = GDP + phosphate + H(+). Its function is as follows. Required for accurate and efficient protein synthesis under certain stress conditions. May act as a fidelity factor of the translation reaction, by catalyzing a one-codon backward translocation of tRNAs on improperly translocated ribosomes. Back-translocation proceeds from a post-translocation (POST) complex to a pre-translocation (PRE) complex, thus giving elongation factor G a second chance to translocate the tRNAs correctly. Binds to ribosomes in a GTP-dependent manner. This is Elongation factor 4 from Paraburkholderia xenovorans (strain LB400).